The chain runs to 99 residues: Protein translation factor SUI1 homolog (99 aa).

It belongs to the SUI1 family.

The protein is Protein translation factor SUI1 homolog of Sulfolobus acidocaldarius (strain ATCC 33909 / DSM 639 / JCM 8929 / NBRC 15157 / NCIMB 11770).